Here is a 201-residue protein sequence, read N- to C-terminus: MFPEQQKEEFVSVWVRDPRIQKEDFWHSYIDYEICIHTNSMCFTMKTSCVRRRYREFVWLRQRLQSNALLVQLPELPSKNLFFNMNNRQHVDQRRQGLEDFLRKVLQNALLLSDSSLHLFLQSHLNSEDIEACVSGQTKYSVEEAIHKFALMNRRFPEEDEEGKKENDIDYDSESSSSGLGHSSDDSSSHGCKVNTAPQES.

The required for interaction with ATP6V1D stretch occupies residues 8–125; the sequence is EEFVSVWVRD…SLHLFLQSHL (118 aa). A PX domain is found at 10–127; the sequence is FVSVWVRDPR…HLFLQSHLNS (118 aa). A 1,2-diacyl-sn-glycero-3-phospho-(1D-myo-inositol-3-phosphate) contacts are provided by arginine 53, lysine 79, and arginine 94. The tract at residues 156–201 is disordered; that stretch reads FPEEDEEGKKENDIDYDSESSSSGLGHSSDDSSSHGCKVNTAPQES.

Belongs to the sorting nexin family. As to quaternary structure, interacts with ATP6V1D; may play a role in ciliogenesis.

The protein localises to the cytoplasm. It is found in the endosome membrane. The protein resides in the cytoskeleton. It localises to the microtubule organizing center. Its subcellular location is the centrosome. Its function is as follows. Probable phosphoinositide-binding protein involved in protein sorting and membrane trafficking in endosomes. Plays a role in cilium biogenesis through regulation of the transport and the localization of proteins to the cilium. Required for the localization to the cilium of V-ATPase subunit ATP6V1D and ATP6V0D1, and RAB8A. Involved in osteoclast differentiation and therefore bone resorption. This is Sorting nexin-10 (SNX10) from Homo sapiens (Human).